The sequence spans 652 residues: Sciellin (652 aa).

Over residues Met-1–Ser-10 the composition is skewed to basic residues. Disordered regions lie at residues Met-1–Phe-29 and Ser-43–Gly-180. Basic and acidic residues predominate over residues Asn-66–Asp-95. An N6-acetyllysine modification is found at Lys-82. Positions Thr-97–Pro-110 are enriched in polar residues. A compositionally biased stretch (low complexity) spans Ala-111–Pro-130. Over residues Leu-161–Cys-170 the composition is skewed to pro residues. A run of 15 repeats spans residues Thr-207 to Gly-226, Glu-227 to Arg-241, Asn-242 to Arg-261, Ala-262 to Gly-281, Asn-282 to Ser-301, Gln-302 to Arg-320, Lys-321 to Arg-340, Gly-341 to Gly-360, Gly-361 to Arg-380, Asp-381 to Ser-398, Gln-399 to Arg-418, His-419 to Arg-438, Asn-439 to Ser-458, Glu-459 to Gly-477, and Gly-478 to Gly-496. The segment at Thr-207–Gly-496 is 15 X approximate tandem repeats. Residue Ser-264 is modified to Phosphoserine. The residue at position 343 (Ser-343) is a Phosphoserine. A disordered region spans residues Glu-353–Asp-385. Residues Asn-436–Cys-455 are disordered. The segment covering Ile-446–Cys-455 has biased composition (polar residues). An LIM zinc-binding domain is found at Asp-583–Lys-649.

In terms of tissue distribution, expressed in the upper layers of stratified epithelia, including, ependyma and choroid plexus of the brain ventricles.

Its subcellular location is the cytoplasm. It localises to the membrane. May function in the assembly or regulation of proteins in the cornified envelope. The LIM domain may be involved in homotypic or heterotypic associations and may function to localize sciellin to the cornified envelope. In Mus musculus (Mouse), this protein is Sciellin (Scel).